We begin with the raw amino-acid sequence, 96 residues long: ESAT-6-like protein EsxR (96 aa).

The protein belongs to the WXG100 family. ESAT-6 subfamily.

It localises to the secreted. The polypeptide is ESAT-6-like protein EsxR (Mycobacterium leprae (strain TN)).